Reading from the N-terminus, the 915-residue chain is Protein inturned (915 aa).

The disordered stretch occupies residues Asn-88–Val-144. The span at Lys-104–Gln-118 shows a compositional bias: basic residues. A compositionally biased stretch (polar residues) spans Gln-128–Gly-139. A PDZ domain is found at Ser-165–Thr-253. The interval Gly-688–Lys-738 is disordered.

The protein belongs to the inturned family.

The protein localises to the cytoplasm. Its subcellular location is the cell surface. The protein resides in the cytoskeleton. It is found in the cilium basal body. Functionally, plays a key role in ciliogenesis and embryonic development. Regulator of cilia formation by controlling the organization of the apical actin cytoskeleton and the positioning of the basal bodies at the apical cell surface, which in turn is essential for the normal orientation of elongating ciliary microtubules. Plays a key role in definition of cell polarity via its role in ciliogenesis but not via conversion extension. Has an indirect effect on hedgehog signaling. The protein is Protein inturned (intu) of Danio rerio (Zebrafish).